We begin with the raw amino-acid sequence, 123 residues long: Zinc metalloproteinase-disintegrin-like jerdohagin (123 aa).

The Peptidase M12B domain occupies 6 to 52 (RYLYIRHDREACTCHANSCIMSAYFSNSHVQYENYINDCKPQCILNE). Zn(2+) is bound at residue His-12. The cysteines at positions 19 and 24 are disulfide-linked. The Ca(2+) site is built by Cys-48 and Asn-51. One can recognise a Disintegrin domain in the interval 53–80 (LHSWVECESGECCEQCRSECDIAESCTN). 4 disulfides stabilise this stretch: Cys-59–Cys-65, Cys-64–Cys-78, Cys-72–Cys-90, and Cys-106–Cys-116. Residues 71-73 (ECD) carry the D/ECD-tripeptide motif.

This sequence belongs to the venom metalloproteinase (M12B) family. P-III subfamily. P-IIIa sub-subfamily. In terms of assembly, monomer. Requires Zn(2+) as cofactor. In terms of processing, the N-terminus is blocked. As to expression, expressed by the venom gland.

The protein resides in the secreted. Its proteolytic and hemorrhagic activities are inhibited by EDTA, but not by PMSF. In terms of biological role, snake venom metalloproteinase that has high hemorrhagic activity and degrades the alpha-chain of fibrinogen (FGA), leaving the beta- and the gamma-chain intact. It may also inhibit platelet aggregation. Cleaves insulin B chain at '25-Phe-|-Val-26', '26-Val-|-Asn-27', '29-His-|-Leu-30', '30-Leu-|-Cys-31', '33-Ser-|-His-34', '35-Leu-|-Val-36', '40-Tyr-|-Leu-41', '41-Leu-|-Val-42', '42-Val-|-Cys-43', '43-Cys-|-Gly-44', '44-Gly-|-Glu-45', '46-Arg-|-Gly-47', '47-Gly-|-Phe-48', '49-Phe-|-Tyr-50' and '52-Pro-|-Lys-53' bonds. Also cleaves human prothrombin (72 kDa) and activation fragment F1 (27 kDa) of activated human prothrombin, to generate two new proteins of 68 and 23 kDa. In Protobothrops jerdonii (Jerdon's pitviper), this protein is Zinc metalloproteinase-disintegrin-like jerdohagin.